A 145-amino-acid chain; its full sequence is MAKTVYVLNGPNLNTLGKREPGIYGGKTLADIEADCRAAAAGLGLEVEFRQSNHEGMLIDWIHEAGERGAGIVLNPGAYGHTSIALHDAIRAVSPLPVIEVHLSNIHAREPFRHRTMTAPVVAGMICGLGPIGYTLALQALAARL.

The Proton acceptor role is filled by tyrosine 24. Substrate contacts are provided by asparagine 75, histidine 81, and aspartate 88. The active-site Proton donor is the histidine 102. Residues 103–104 and arginine 113 each bind substrate; that span reads LS.

This sequence belongs to the type-II 3-dehydroquinase family. Homododecamer.

The enzyme catalyses 3-dehydroquinate = 3-dehydroshikimate + H2O. It functions in the pathway metabolic intermediate biosynthesis; chorismate biosynthesis; chorismate from D-erythrose 4-phosphate and phosphoenolpyruvate: step 3/7. Functionally, catalyzes a trans-dehydration via an enolate intermediate. The chain is 3-dehydroquinate dehydratase from Chelativorans sp. (strain BNC1).